The primary structure comprises 215 residues: Small ribosomal subunit protein uS5 (215 aa).

Residues 1-12 (MSGTQRRGGGAG) show a composition bias toward gly residues. The segment at 1–31 (MSGTQRRGGGAGGERRGRDNRRGQNDRNRNQ) is disordered. A compositionally biased stretch (basic and acidic residues) spans 13-31 (GERRGRDNRRGQNDRNRNQ). The 64-residue stretch at 34–97 (YLERVVAINR…EEAKKHFFKV (64 aa)) folds into the S5 DRBM domain.

Belongs to the universal ribosomal protein uS5 family. In terms of assembly, part of the 30S ribosomal subunit. Contacts proteins S4 and S8.

With S4 and S12 plays an important role in translational accuracy. Functionally, located at the back of the 30S subunit body where it stabilizes the conformation of the head with respect to the body. The sequence is that of Small ribosomal subunit protein uS5 from Cutibacterium acnes (strain DSM 16379 / KPA171202) (Propionibacterium acnes).